A 746-amino-acid polypeptide reads, in one-letter code: Tudor domain-containing protein krimp (746 aa).

Positions 1–310 (MNLEDISMIM…RDIYNQILKD (310 aa)) are involved in homooligomerization. The non-canonical tudor domain stretch occupies residues 311–489 (MAAFPENTIV…PAGITEDDMA (179 aa)). The C3H1-type zinc finger occupies 511–540 (KDEQRICRHYDPKLNGCFKGNNCRFAHEPF). The Tudor domain maps to 613-670 (KPRLLDIVLALYSDGCFYRAQIIDEFPSEYMIFYVDYGNTEFVPLSCLAPCENVDSFK).

This sequence belongs to the Tudor domain containing protein family. In terms of assembly, homooligomerizes (via N-terminus). Component of the ping-pong piRNA processing (4P) complex consisting of krimp, aub and AGO3; a single molecule of krimp can bind both aub and AGO3 without the need for homooligomerization. Interacts (via canonical tudor domain) with aub (via N-terminus when symmetrically dimethylated on arginine residues). Interacts (via non-canonical tudor domain) with AGO3 (via N-terminus when unmethylated on arginine residues); this interaction leads to symmetrical dimethylation on AGO3 arginine residues and its subsequent dissociation from krimp. Krimp associated AGO3 is mostly free of piRNA binding and the interaction plays an important role in the loading of AGO3 with piRNAs; piRNA binding stimulates methylation of ACO3 by the csul/PRMT5 methylosome complex and promotes dissociation of the two proteins. In terms of tissue distribution, widely expressed in female germline cells, including differentiating germ cells in germarium and egg chambers (at protein level).

It is found in the cytoplasm. The protein resides in the perinuclear region. The protein localises to the cytoplasmic ribonucleoprotein granule. Functionally, stable structural component of the perinuclear meiotic nuage, a germline-specific subcellular membraneless ribonucleoprotein compartment involved in production of transposable element-repressing Piwi-interacting RNA (piRNA)-induced silencing complexes (piRISCs), which are essential for maintaining germline integrity during oogenesis. Scaffold component of the ping-pong piRNA processing (4P) complex that recruits the Piwi proteins aub and AGO3 to specific subregions of the nuage where it coordinates their activity in the ping-pong amplification step of secondary piRNA biogenesis. Binds methylated aub, which is associated with piRNA, and unmethylated AGO3, which is not associated with piRNA, bringing the Piwi proteins into close proximity and facilitating the loading of freshly cut piRNAs generated by aub onto AGO3. Promotes asymmetric ping-pong amplification by aub and AGO3 to bias production towards antisense piRNAs capable of silencing transposable elements. Required for symmetrical dimethylation of AGO3, probably by recruitment to the nuage where methylosome components are located; dimethylation promotes AGO3 dissociation and interaction with other tudor-domain containing proteins such as tud. Required for the recruitment of mael to the perinuclear meiotic nuage. Required for the recruitment of aub to the nuage in testes but not in ovaries. Involved in repression of long interspersed nuclear elements (LINEs) including HeT-A, I-element LINEs and possibly mst40, but not TART LINEs. The protein is Tudor domain-containing protein krimp of Drosophila melanogaster (Fruit fly).